Reading from the N-terminus, the 376-residue chain is Chaperone protein DnaJ (376 aa).

The J domain maps to 5–70; the sequence is DYYEILGVSK…QKRAAYDQYG (66 aa). The CR-type zinc finger occupies 131–209; the sequence is GVTKEIRIPT…CHGHGRVERS (79 aa). Residues Cys144, Cys147, Cys161, Cys164, Cys183, Cys186, Cys197, and Cys200 each coordinate Zn(2+). 4 CXXCXGXG motif repeats span residues 144–151, 161–168, 183–190, and 197–204; these read CDVCHGSG, CPTCHGSG, CPHCQGRG, and CNKCHGHG.

The protein belongs to the DnaJ family. In terms of assembly, homodimer. Requires Zn(2+) as cofactor.

The protein resides in the cytoplasm. Its function is as follows. Participates actively in the response to hyperosmotic and heat shock by preventing the aggregation of stress-denatured proteins and by disaggregating proteins, also in an autonomous, DnaK-independent fashion. Unfolded proteins bind initially to DnaJ; upon interaction with the DnaJ-bound protein, DnaK hydrolyzes its bound ATP, resulting in the formation of a stable complex. GrpE releases ADP from DnaK; ATP binding to DnaK triggers the release of the substrate protein, thus completing the reaction cycle. Several rounds of ATP-dependent interactions between DnaJ, DnaK and GrpE are required for fully efficient folding. Also involved, together with DnaK and GrpE, in the DNA replication of plasmids through activation of initiation proteins. This Shigella flexneri serotype 5b (strain 8401) protein is Chaperone protein DnaJ.